Consider the following 293-residue polypeptide: Movement protein BC1 (293 aa).

It belongs to the begomovirus movement protein BC1 family. Binds to dimeric supercoiled plasmid DNA. Phosphorylated.

Its subcellular location is the host cell membrane. It is found in the host microsome membrane. It localises to the host endoplasmic reticulum membrane. Functionally, transports viral genome to neighboring plant cells directly through plasmosdesmata, without any budding. The movement protein allows efficient cell to cell propagation, by bypassing the host cell wall barrier. Begomovirus genome is shuttled out of nucleus by Nuclear shuttle protein (NSP) and the movement protein transports the DNA-NSP complex to cell plasmodesmata and facilitates further movement across the cell wall. This chain is Movement protein BC1, found in Potato yellow mosaic virus (isolate Venezuela) (PYMV).